The chain runs to 233 residues: Sugar fermentation stimulation protein homolog (233 aa).

Belongs to the SfsA family.

This is Sugar fermentation stimulation protein homolog from Acetivibrio thermocellus (strain ATCC 27405 / DSM 1237 / JCM 9322 / NBRC 103400 / NCIMB 10682 / NRRL B-4536 / VPI 7372) (Clostridium thermocellum).